The sequence spans 309 residues: Glutaminase (309 aa).

Positions 64, 114, 160, 167, 191, 243, and 261 each coordinate substrate.

Belongs to the glutaminase family. In terms of assembly, homotetramer.

The enzyme catalyses L-glutamine + H2O = L-glutamate + NH4(+). The chain is Glutaminase from Methylobacterium sp. (strain 4-46).